The chain runs to 232 residues: Orotidine 5'-phosphate decarboxylase (232 aa).

Substrate contacts are provided by residues aspartate 11, lysine 33, 61–70 (DMKLFDIGAT), threonine 116, arginine 179, glutamine 188, glycine 208, and arginine 209. Lysine 63 functions as the Proton donor in the catalytic mechanism.

It belongs to the OMP decarboxylase family. Type 1 subfamily. Homodimer.

It carries out the reaction orotidine 5'-phosphate + H(+) = UMP + CO2. Its pathway is pyrimidine metabolism; UMP biosynthesis via de novo pathway; UMP from orotate: step 2/2. In terms of biological role, catalyzes the decarboxylation of orotidine 5'-monophosphate (OMP) to uridine 5'-monophosphate (UMP). The protein is Orotidine 5'-phosphate decarboxylase of Cereibacter sphaeroides (strain ATCC 17023 / DSM 158 / JCM 6121 / CCUG 31486 / LMG 2827 / NBRC 12203 / NCIMB 8253 / ATH 2.4.1.) (Rhodobacter sphaeroides).